A 291-amino-acid polypeptide reads, in one-letter code: ATP synthase gamma chain (291 aa).

The protein belongs to the ATPase gamma chain family. F-type ATPases have 2 components, CF(1) - the catalytic core - and CF(0) - the membrane proton channel. CF(1) has five subunits: alpha(3), beta(3), gamma(1), delta(1), epsilon(1). CF(0) has three main subunits: a, b and c.

Its subcellular location is the cell inner membrane. In terms of biological role, produces ATP from ADP in the presence of a proton gradient across the membrane. The gamma chain is believed to be important in regulating ATPase activity and the flow of protons through the CF(0) complex. The protein is ATP synthase gamma chain of Variovorax paradoxus (strain S110).